Reading from the N-terminus, the 78-residue chain is Structural DNA-binding protein p10 (78 aa).

Low complexity predominate over residues Met1 to Ala25. Residues Met1–Gly41 are disordered.

It belongs to the asfivirus P10 family.

Its subcellular location is the virion. In terms of biological role, may play a role in genome packaging through direct interaction with viral DNA. Binds to ssDNA and dsDNA with the same apparent affinity in vitro. The polypeptide is Structural DNA-binding protein p10 (African swine fever virus (isolate Warthog/Namibia/Wart80/1980) (ASFV)).